The chain runs to 303 residues: 2-dehydropantoate 2-reductase (303 aa).

Residues Gly7–Gly12, Asn98, and Ala122 each bind NADP(+). Asn98 is a binding site for substrate. Lys176 serves as the catalytic Proton donor. Positions 180, 184, 194, and 244 each coordinate substrate. Glu256 lines the NADP(+) pocket.

It belongs to the ketopantoate reductase family. In terms of assembly, monomer.

It is found in the cytoplasm. It carries out the reaction (R)-pantoate + NADP(+) = 2-dehydropantoate + NADPH + H(+). Its pathway is cofactor biosynthesis; (R)-pantothenate biosynthesis; (R)-pantoate from 3-methyl-2-oxobutanoate: step 2/2. Catalyzes the NADPH-dependent reduction of ketopantoate into pantoic acid. This chain is 2-dehydropantoate 2-reductase (panE), found in Salmonella typhi.